Consider the following 138-residue polypeptide: Large ribosomal subunit protein uL16 (138 aa).

The segment covering 1 to 13 (MLQPSRRKFRKEQ) has biased composition (basic residues). Positions 1 to 22 (MLQPSRRKFRKEQKGRNTGIAT) are disordered.

It belongs to the universal ribosomal protein uL16 family. In terms of assembly, part of the 50S ribosomal subunit.

Functionally, binds 23S rRNA and is also seen to make contacts with the A and possibly P site tRNAs. The chain is Large ribosomal subunit protein uL16 from Methylibium petroleiphilum (strain ATCC BAA-1232 / LMG 22953 / PM1).